A 259-amino-acid chain; its full sequence is NH(3)-dependent NAD(+) synthetase (259 aa).

ATP is bound at residue 33–40 (GLSGGIDS). Asp-39 provides a ligand contact to Mg(2+). Arg-119 contacts deamido-NAD(+). Residue Thr-139 participates in ATP binding. Glu-144 serves as a coordination point for Mg(2+). 2 residues coordinate deamido-NAD(+): Lys-152 and Asp-159. ATP-binding residues include Lys-168 and Ser-190. 249–250 (HK) contributes to the deamido-NAD(+) binding site.

It belongs to the NAD synthetase family. As to quaternary structure, homodimer.

The enzyme catalyses deamido-NAD(+) + NH4(+) + ATP = AMP + diphosphate + NAD(+) + H(+). Its pathway is cofactor biosynthesis; NAD(+) biosynthesis; NAD(+) from deamido-NAD(+) (ammonia route): step 1/1. Catalyzes the ATP-dependent amidation of deamido-NAD to form NAD. Uses ammonia as a nitrogen source. The protein is NH(3)-dependent NAD(+) synthetase of Methanocaldococcus jannaschii (strain ATCC 43067 / DSM 2661 / JAL-1 / JCM 10045 / NBRC 100440) (Methanococcus jannaschii).